The primary structure comprises 207 residues: Crossover junction endodeoxyribonuclease RuvC (207 aa).

Catalysis depends on residues aspartate 11, glutamate 71, and aspartate 143. Residues aspartate 11, glutamate 71, and aspartate 143 each contribute to the Mg(2+) site.

It belongs to the RuvC family. As to quaternary structure, homodimer which binds Holliday junction (HJ) DNA. The HJ becomes 2-fold symmetrical on binding to RuvC with unstacked arms; it has a different conformation from HJ DNA in complex with RuvA. In the full resolvosome a probable DNA-RuvA(4)-RuvB(12)-RuvC(2) complex forms which resolves the HJ. It depends on Mg(2+) as a cofactor.

The protein resides in the cytoplasm. The catalysed reaction is Endonucleolytic cleavage at a junction such as a reciprocal single-stranded crossover between two homologous DNA duplexes (Holliday junction).. In terms of biological role, the RuvA-RuvB-RuvC complex processes Holliday junction (HJ) DNA during genetic recombination and DNA repair. Endonuclease that resolves HJ intermediates. Cleaves cruciform DNA by making single-stranded nicks across the HJ at symmetrical positions within the homologous arms, yielding a 5'-phosphate and a 3'-hydroxyl group; requires a central core of homology in the junction. The consensus cleavage sequence is 5'-(A/T)TT(C/G)-3'. Cleavage occurs on the 3'-side of the TT dinucleotide at the point of strand exchange. HJ branch migration catalyzed by RuvA-RuvB allows RuvC to scan DNA until it finds its consensus sequence, where it cleaves and resolves the cruciform DNA. The chain is Crossover junction endodeoxyribonuclease RuvC from Methylobacterium radiotolerans (strain ATCC 27329 / DSM 1819 / JCM 2831 / NBRC 15690 / NCIMB 10815 / 0-1).